The primary structure comprises 201 residues: Imidazole glycerol phosphate synthase subunit HisH (201 aa).

The Glutamine amidotransferase type-1 domain maps to lysine 2–methionine 201. The Nucleophile role is filled by cysteine 77. Catalysis depends on residues histidine 183 and glutamate 185.

Heterodimer of HisH and HisF.

It is found in the cytoplasm. The catalysed reaction is 5-[(5-phospho-1-deoxy-D-ribulos-1-ylimino)methylamino]-1-(5-phospho-beta-D-ribosyl)imidazole-4-carboxamide + L-glutamine = D-erythro-1-(imidazol-4-yl)glycerol 3-phosphate + 5-amino-1-(5-phospho-beta-D-ribosyl)imidazole-4-carboxamide + L-glutamate + H(+). The enzyme catalyses L-glutamine + H2O = L-glutamate + NH4(+). Its pathway is amino-acid biosynthesis; L-histidine biosynthesis; L-histidine from 5-phospho-alpha-D-ribose 1-diphosphate: step 5/9. IGPS catalyzes the conversion of PRFAR and glutamine to IGP, AICAR and glutamate. The HisH subunit catalyzes the hydrolysis of glutamine to glutamate and ammonia as part of the synthesis of IGP and AICAR. The resulting ammonia molecule is channeled to the active site of HisF. This chain is Imidazole glycerol phosphate synthase subunit HisH, found in Photorhabdus laumondii subsp. laumondii (strain DSM 15139 / CIP 105565 / TT01) (Photorhabdus luminescens subsp. laumondii).